Here is a 454-residue protein sequence, read N- to C-terminus: Phosphoglucosamine mutase (454 aa).

Ser-102 serves as the catalytic Phosphoserine intermediate. Ser-102, Asp-247, Asp-249, and Asp-251 together coordinate Mg(2+). Ser-102 carries the phosphoserine modification.

This sequence belongs to the phosphohexose mutase family. The cofactor is Mg(2+). In terms of processing, activated by phosphorylation.

The catalysed reaction is alpha-D-glucosamine 1-phosphate = D-glucosamine 6-phosphate. Its function is as follows. Catalyzes the conversion of glucosamine-6-phosphate to glucosamine-1-phosphate. This Kineococcus radiotolerans (strain ATCC BAA-149 / DSM 14245 / SRS30216) protein is Phosphoglucosamine mutase.